The sequence spans 169 residues: 6,7-dimethyl-8-ribityllumazine synthase (169 aa).

5-amino-6-(D-ribitylamino)uracil contacts are provided by residues Phe-24, 58–60 (ALE), and 82–84 (AVV). 87-88 (ET) contacts (2S)-2-hydroxy-3-oxobutyl phosphate. The active-site Proton donor is His-90. Residue Asn-115 coordinates 5-amino-6-(D-ribitylamino)uracil. (2S)-2-hydroxy-3-oxobutyl phosphate is bound at residue Arg-129.

This sequence belongs to the DMRL synthase family.

It carries out the reaction (2S)-2-hydroxy-3-oxobutyl phosphate + 5-amino-6-(D-ribitylamino)uracil = 6,7-dimethyl-8-(1-D-ribityl)lumazine + phosphate + 2 H2O + H(+). The protein operates within cofactor biosynthesis; riboflavin biosynthesis; riboflavin from 2-hydroxy-3-oxobutyl phosphate and 5-amino-6-(D-ribitylamino)uracil: step 1/2. Functionally, catalyzes the formation of 6,7-dimethyl-8-ribityllumazine by condensation of 5-amino-6-(D-ribitylamino)uracil with 3,4-dihydroxy-2-butanone 4-phosphate. This is the penultimate step in the biosynthesis of riboflavin. The chain is 6,7-dimethyl-8-ribityllumazine synthase from Cupriavidus metallidurans (strain ATCC 43123 / DSM 2839 / NBRC 102507 / CH34) (Ralstonia metallidurans).